The chain runs to 121 residues: MVQIVISSARAGGLAEWVLMELQGEIEARYSTGLAGNLLGDLHYTTEGIPVLIVGHHILYGKIIHLEKPFAVLVKHTPGDQDCDELGRETGTRYLVTALIKDKILFKTRPKPIITSVPKKV.

The protein belongs to the CTF8 family. Component of the CTF18-RFC complex, which consists of CTF18, CTF8, DSCC1, RFC2, RFC3, RFC4 and RFC5. The CTF18-RFC complex does not interact with the Rad9/Rad1/Hus1 complex. The CTF18-RFC complex interacts with POLH. CTF18/CTF8/DSCC1 associate with PCNA. CTF8 exists as a dimer with DSCC1.

Its subcellular location is the nucleus. Chromosome cohesion factor involved in sister chromatid cohesion and fidelity of chromosome transmission. Component of one of the cell nuclear antigen loader complexes, CTF18-replication factor C (CTF18-RFC), which consists of CTF18, CTF8, DSCC1, RFC2, RFC3, RFC4 and RFC5. The CTF18-RFC complex binds to single-stranded and primed DNAs and has weak ATPase activity that is stimulated the presence of primed DNA, replication protein A (RPA) and proliferating cell nuclear antigen (PCNA). The CTF18-RFC complex catalyzes the ATP-dependent loading of PCNA onto primed and gapped DNA. It also interacts with and stimulates POLH, which is suggestive of a protein network that coordinates DNA repair, recombination and chromosome cohesion reactions with replication fork progression. The sequence is that of Chromosome transmission fidelity protein 8 homolog from Homo sapiens (Human).